The following is a 241-amino-acid chain: Uridylate kinase (241 aa).

ATP is bound at residue 11 to 14; that stretch reads KFSG. The interval 19-24 is involved in allosteric activation by GTP; the sequence is GENGFG. Gly53 is a UMP binding site. Gly54 and Arg58 together coordinate ATP. Residues Asp74 and 135–142 each bind UMP; that span reads TGNPFFTT. Thr162, Tyr168, and Asp171 together coordinate ATP.

Belongs to the UMP kinase family. Homohexamer.

Its subcellular location is the cytoplasm. The catalysed reaction is UMP + ATP = UDP + ADP. It participates in pyrimidine metabolism; CTP biosynthesis via de novo pathway; UDP from UMP (UMPK route): step 1/1. Its activity is regulated as follows. Allosterically activated by GTP. Inhibited by UTP. Catalyzes the reversible phosphorylation of UMP to UDP. The chain is Uridylate kinase from Wolinella succinogenes (strain ATCC 29543 / DSM 1740 / CCUG 13145 / JCM 31913 / LMG 7466 / NCTC 11488 / FDC 602W) (Vibrio succinogenes).